Reading from the N-terminus, the 323-residue chain is tRNA U34 carboxymethyltransferase (323 aa).

Carboxy-S-adenosyl-L-methionine-binding positions include Lys91, Trp105, Lys110, Gly130, 152–154 (DPT), 181–182 (IE), Met196, Tyr200, and Arg315.

Belongs to the class I-like SAM-binding methyltransferase superfamily. CmoB family. As to quaternary structure, homotetramer.

It catalyses the reaction carboxy-S-adenosyl-L-methionine + 5-hydroxyuridine(34) in tRNA = 5-carboxymethoxyuridine(34) in tRNA + S-adenosyl-L-homocysteine + H(+). In terms of biological role, catalyzes carboxymethyl transfer from carboxy-S-adenosyl-L-methionine (Cx-SAM) to 5-hydroxyuridine (ho5U) to form 5-carboxymethoxyuridine (cmo5U) at position 34 in tRNAs. This chain is tRNA U34 carboxymethyltransferase, found in Escherichia coli O81 (strain ED1a).